Reading from the N-terminus, the 294-residue chain is tRNA pseudouridine synthase B (294 aa).

Asp-38 (nucleophile) is an active-site residue.

It belongs to the pseudouridine synthase TruB family. Type 1 subfamily.

The catalysed reaction is uridine(55) in tRNA = pseudouridine(55) in tRNA. Responsible for synthesis of pseudouridine from uracil-55 in the psi GC loop of transfer RNAs. The polypeptide is tRNA pseudouridine synthase B (Clostridium perfringens (strain ATCC 13124 / DSM 756 / JCM 1290 / NCIMB 6125 / NCTC 8237 / Type A)).